A 272-amino-acid chain; its full sequence is 2-amino-3,7-dideoxy-D-threo-hept-6-ulosonate synthase (272 aa).

Catalysis depends on D33, which acts as the Proton acceptor. 1-deoxy-D-threo-hexo-2,5-diulose 6-phosphate contacts are provided by residues 33–37 (DHGVS) and 153–155 (YPR). Y153 serves as the catalytic Proton donor. K184 acts as the Schiff-base intermediate with substrate in catalysis. Residues 209–210 (GG) and 237–238 (GR) contribute to the 1-deoxy-D-threo-hexo-2,5-diulose 6-phosphate site.

It belongs to the DeoC/FbaB aldolase family. ADHS subfamily. In terms of assembly, homodecamer.

It catalyses the reaction 1-deoxy-D-threo-hexo-2,5-diulose 6-phosphate + L-aspartate 4-semialdehyde = 2,3-dioxopropyl phosphate + 2-amino-2,3,7-trideoxy-D-lyxo-hept-6-ulosonate. Functionally, catalyzes a transaldol reaction between 6-deoxy-5-ketofructose 1-phosphate (DKFP) and L-aspartate semialdehyde (ASA) with an elimination of hydroxypyruvaldehyde phosphate to yield 2-amino-3,7-dideoxy-D-threo-hept-6-ulosonate (ADH). Plays a key role in an alternative pathway of the biosynthesis of 3-dehydroquinate (DHQ), which is involved in the canonical pathway for the biosynthesis of aromatic amino acids. The sequence is that of 2-amino-3,7-dideoxy-D-threo-hept-6-ulosonate synthase from Methanococcus maripaludis (strain C7 / ATCC BAA-1331).